We begin with the raw amino-acid sequence, 377 residues long: Homoserine O-acetyltransferase (377 aa).

In terms of domain architecture, AB hydrolase-1 spans 48-347 (NVVLIEHALT…PVGHDAFLTE (300 aa)). Catalysis depends on serine 143, which acts as the Nucleophile. Arginine 213 serves as a coordination point for substrate. Catalysis depends on residues aspartate 311 and histidine 341. Aspartate 342 contributes to the substrate binding site.

It belongs to the AB hydrolase superfamily. MetX family. As to quaternary structure, homodimer.

Its subcellular location is the cytoplasm. The enzyme catalyses L-homoserine + acetyl-CoA = O-acetyl-L-homoserine + CoA. The protein operates within amino-acid biosynthesis; L-methionine biosynthesis via de novo pathway; O-acetyl-L-homoserine from L-homoserine: step 1/1. In terms of biological role, transfers an acetyl group from acetyl-CoA to L-homoserine, forming acetyl-L-homoserine. The sequence is that of Homoserine O-acetyltransferase from Corynebacterium glutamicum (strain ATCC 13032 / DSM 20300 / JCM 1318 / BCRC 11384 / CCUG 27702 / LMG 3730 / NBRC 12168 / NCIMB 10025 / NRRL B-2784 / 534).